Reading from the N-terminus, the 266-residue chain is 4-diphosphocytidyl-2-C-methyl-D-erythritol kinase (266 aa).

Lys11 is a catalytic residue. 103–113 contacts ATP; sequence PTFAGLGGGSS. Asp145 is a catalytic residue.

Belongs to the GHMP kinase family. IspE subfamily.

It carries out the reaction 4-CDP-2-C-methyl-D-erythritol + ATP = 4-CDP-2-C-methyl-D-erythritol 2-phosphate + ADP + H(+). Its pathway is isoprenoid biosynthesis; isopentenyl diphosphate biosynthesis via DXP pathway; isopentenyl diphosphate from 1-deoxy-D-xylulose 5-phosphate: step 3/6. In terms of biological role, catalyzes the phosphorylation of the position 2 hydroxy group of 4-diphosphocytidyl-2C-methyl-D-erythritol. In Sulfurimonas denitrificans (strain ATCC 33889 / DSM 1251) (Thiomicrospira denitrificans (strain ATCC 33889 / DSM 1251)), this protein is 4-diphosphocytidyl-2-C-methyl-D-erythritol kinase.